Consider the following 343-residue polypeptide: Methionine synthase (343 aa).

Positions 211, 213, 236, and 315 each coordinate Zn(2+).

It belongs to the archaeal MetE family. It depends on Zn(2+) as a cofactor.

Its pathway is amino-acid biosynthesis; L-methionine biosynthesis via de novo pathway. In terms of biological role, catalyzes the transfer of a methyl group to L-homocysteine resulting in methionine formation. The physiological methyl donor is unknown. This is Methionine synthase from Thermoplasma acidophilum (strain ATCC 25905 / DSM 1728 / JCM 9062 / NBRC 15155 / AMRC-C165).